We begin with the raw amino-acid sequence, 318 residues long: ATP phosphoribosyltransferase regulatory subunit (318 aa).

It belongs to the class-II aminoacyl-tRNA synthetase family. HisZ subfamily. Heteromultimer composed of HisG and HisZ subunits.

The protein localises to the cytoplasm. It participates in amino-acid biosynthesis; L-histidine biosynthesis; L-histidine from 5-phospho-alpha-D-ribose 1-diphosphate: step 1/9. Functionally, required for the first step of histidine biosynthesis. May allow the feedback regulation of ATP phosphoribosyltransferase activity by histidine. In Lactococcus lactis subsp. cremoris (strain MG1363), this protein is ATP phosphoribosyltransferase regulatory subunit.